The chain runs to 659 residues: Protein FAM161A (659 aa).

The segment at 34 to 59 (LGERQQQRTASVSPQRLPRTSMGTPA) is disordered. A coiled-coil region spans residues 96 to 120 (YVQVEKLKKAHLQNMEQLEKMYDKK). 2 disordered regions span residues 165–190 (GSVS…EHSV) and 401–428 (LAPG…PKIS). The span at 408–426 (GTKKGKCYKPKEKQKHKPK) shows a compositional bias: basic residues. Positions 531–557 (AIRKREKQRTKDYMKELEAMEQRVLNK) form a coiled coil. The interval 594 to 659 (NGQSASVDEH…TDEDHSMEEI (66 aa)) is disordered. Basic and acidic residues predominate over residues 600–616 (VDEHVSVREENNPRAES). The segment covering 637-650 (PESEEAQEEDAYST) has biased composition (acidic residues).

This sequence belongs to the FAM161 family.

Its subcellular location is the cytoplasm. The protein localises to the cytoskeleton. It is found in the cilium basal body. The protein resides in the cell projection. It localises to the cilium. Its subcellular location is the microtubule organizing center. The protein localises to the centrosome. It is found in the centriole. Its function is as follows. Involved in ciliogenesis. This is Protein FAM161A (fam161a) from Xenopus tropicalis (Western clawed frog).